Reading from the N-terminus, the 385-residue chain is Probable thioesterase PNKD (385 aa).

Residues 31–42 (NKASQNRSRALQ) are compositionally biased toward polar residues. The segment at 31-57 (NKASQNRSRALQSHSSPECKEEPEPLS) is disordered. Positions 172, 174, 176, 177, 229, 253, and 291 each coordinate Zn(2+).

Belongs to the metallo-beta-lactamase superfamily. Glyoxalase II family. It depends on Zn(2+) as a cofactor. Post-translationally, undergoes cleavage at the N-terminus.

Its subcellular location is the cell membrane. The protein resides in the mitochondrion. It catalyses the reaction a thioester + H2O = a thiol + a carboxylate + H(+). Functionally, probable thioesterase that may play a role in cellular detoxification processes; it likely acts on a yet-unknown alpha-hydroxythioester substrate. In vitro, it is able to catalyze the hydrolysis of S-D-lactoyl-glutathione to form glutathione and D-lactic acid at very low rate, though this reaction is not physiologically relevant in vivo. The chain is Probable thioesterase PNKD (PNKD) from Bos taurus (Bovine).